Reading from the N-terminus, the 1286-residue chain is MSHLVDPTSGDLPVRDIDAIPLVLPASKGKNMKTQPPLSRMNREELEDSFFRLREDHMLVKELSWKQQDEIKRLRTTLLRLTAAGRDLRVAEEAAPLSETARRGQKAGWRQRLSMHQRPQMHRLQGHFHCVGPASPRRAQPRVQVGHRQLHTAGAPVPEKPKRGPRDRLSYTAPPSFKEHATNENRGEVASKPSELVSGSNSIISFSSVISMAKPIGLCMPNSAHIMASNTMQVEEPPKSPEKMWPKDENFEQRSSLECAQKAAELRASIKEKVELIRLKKLLHERNASLVMTKAQLTEVQEAYETLLQKNQGILSAAHEALLKQVNELRAELKEESKKAVSLKSQLEDVSILQMTLKEFQERVEDLEKERKLLNDNYDKLLESMLDSSDSSSQPHWSNELIAEQLQQQVSQLQDQLDAELEDKRKVLLELSREKAQNEDLKLEVTNILQKHKQEVELLQNAATISQPPDRQSEPATHPAVLQENTQIEPSEPKNQEEKKLSQVLNELQVSHAETTLELEKTRDMLILQRKINVCYQEELEAMMTKADNDNRDHKEKLERLTRLLDLKNNRIKQLEGILRSHDLPTSEQLKDVAYGTRPLSLCLETLPAHGDEDKVDISLLHQGENLFELHIHQAFLTSAALAQAGDTQPTTFCTYSFYDFETHCTPLSVGPQPLYDFTSQYVMETDSLFLHYLQEASARLDIHQAMASEHSTLAAGWICFDRVLETVEKVHGLATLIGAGGEEFGVLEYWMRLRFPIKPSLQACNKRKKAQVYLSTDVLGGRKAQEEEFRSESWEPQNELWIEITKCCGLRSRWLGTQPSPYAVYRFFTFSDHDTAIIPASNNPYFRDQARFPVLVTSDLDHYLRREALSIHVFDDEDLEPGSYLGRARVPLLPLAKNESIKGDFNLTDPAEKPNGSIQVQLDWKFPYIPPESFLKPEAQTKGKDTKDSSKISSEEEKASFPSQDQMASPEVPIEAGQYRSKRKPPHGGERKEKEHQVVSYSRRKHGKRIGVQGKNRMEYLSLNILNGNTPEQVNYTEWKFSETNSFIGDGFKNQHEEEEMTLSHSALKQKEPLHPVNDKESSEQGSEVSEAQTTDSDDVIVPPMSQKYPKADSEKMCIEIVSLAFYPEAEVMSDENIKQVYVEYKFYDLPLSETETPVSLRKPRAGEEIHFHFSKVIDLDPQEQQGRRRFLFDMLNGQDPDQGHLKFTVVSDPLDEEKKECEEVGYAYLQLWQILESGRDILEQELDIVSPEDLATPIGRLKVSLQAAAVLHAIYKEMTEDLFS.

The interval 144-193 (QVGHRQLHTAGAPVPEKPKRGPRDRLSYTAPPSFKEHATNENRGEVASKP) is disordered. Basic and acidic residues-rich tracts occupy residues 159-169 (EKPKRGPRDRL) and 177-189 (FKEH…RGEV). A coiled-coil region spans residues 294 to 584 (KAQLTEVQEA…LEGILRSHDL (291 aa)). Positions 781 to 906 (GGRKAQEEEF…AKNESIKGDF (126 aa)) constitute a C2 domain. Disordered regions lie at residues 934–1008 (SFLK…RKHG) and 1058–1108 (EEEE…PMSQ). Composition is skewed to basic and acidic residues over residues 940-960 (AQTK…EEKA), 988-998 (HGGERKEKEHQ), and 1070-1084 (KQKE…KESS). Residues 1085–1096 (EQGSEVSEAQTT) show a composition bias toward polar residues. Residues 1091-1281 (SEAQTTDSDD…VLHAIYKEMT (191 aa)) form an interaction with RPGR region.

The protein belongs to the RPGRIP1 family. In terms of assembly, forms homodimers and elongated homopolymers. Interacts with RPGR. Interacts with NPHP4. Interacts with NEK4. Interacts with SPATA7. Interacts with CEP290/NPHP6; mediating the association between RPGR and CEP290/NPHP6. As to expression, strong expression in retina, with weaker expression in testis. Expressed in other neurons such as amacrine cells. Colocalizes with RGPR in the outer segment of rod photoreceptors and cone outer segments.

The protein resides in the cell projection. The protein localises to the cilium. May function as scaffolding protein. Required for normal location of RPGR at the connecting cilium of photoreceptor cells. Required for normal disk morphogenesis and disk organization in the outer segment of photoreceptor cells and for survival of photoreceptor cells. The sequence is that of X-linked retinitis pigmentosa GTPase regulator-interacting protein 1 (RPGRIP1) from Homo sapiens (Human).